The sequence spans 122 residues: Large ribosomal subunit protein uL22 (122 aa).

This sequence belongs to the universal ribosomal protein uL22 family. As to quaternary structure, part of the 50S ribosomal subunit.

Functionally, this protein binds specifically to 23S rRNA; its binding is stimulated by other ribosomal proteins, e.g. L4, L17, and L20. It is important during the early stages of 50S assembly. It makes multiple contacts with different domains of the 23S rRNA in the assembled 50S subunit and ribosome. The globular domain of the protein is located near the polypeptide exit tunnel on the outside of the subunit, while an extended beta-hairpin is found that lines the wall of the exit tunnel in the center of the 70S ribosome. This chain is Large ribosomal subunit protein uL22, found in Caldicellulosiruptor saccharolyticus (strain ATCC 43494 / DSM 8903 / Tp8T 6331).